We begin with the raw amino-acid sequence, 189 residues long: MRLSLLLLLPLLGAWAIPGGFGDEASLTATAPELDDEEKFSTHIPTHLRCDACRAVAYQMWQHLTKAEAKLLPLDSGGRRELSESVYTDVLDQSCSQTWQGYGVGEVDQVKRLMGPGLSTGAQPSIMVMIMEGLWPTRLSKTCFHYLGEFGEDQIYEAHQQGRGTLEALLCGGPRGACSEKAPDTRTEL.

The N-terminal stretch at 1–16 (MRLSLLLLLPLLGAWA) is a signal peptide. 3 disulfides stabilise this stretch: cysteine 50–cysteine 178, cysteine 53–cysteine 171, and cysteine 95–cysteine 143. The Prevents secretion from ER signature appears at 186 to 189 (RTEL).

Belongs to the MZB1 family. In terms of assembly, part of the ER chaperone complex, a multi-protein complex in the endoplasmic reticulum containing a large number of molecular chaperones which associates with unassembled incompletely folded immunoglobulin heavy chains. Interacts with HSP90B1 and PDIA3 in a calcium-dependent manner. In terms of processing, forms an interchain disulfide bond with IgM monomers.

It is found in the endoplasmic reticulum lumen. The protein resides in the secreted. Its function is as follows. Associates with immunoglobulin M (IgM) heavy and light chains and promotes IgM assembly and secretion. May exert its effect by acting as a molecular chaperone or as an oxidoreductase as it displays a low level of oxidoreductase activity. Helps to diversify peripheral B-cell functions by regulating Ca(2+) stores, antibody secretion, and integrin activation. Functionally, acts as a hormone-regulated adipokine/pro-inflammatory cytokine that is implicated in causing chronic inflammation, affecting cellular expansion and blunting insulin response in adipocytes. May have a role in the onset of insulin resistance. This chain is Marginal zone B- and B1-cell-specific protein (MZB1), found in Bos taurus (Bovine).